Consider the following 330-residue polypeptide: Putative 1-aminocyclopropane-1-carboxylate deaminase (330 aa).

An N6-(pyridoxal phosphate)lysine modification is found at Lys54.

It belongs to the ACC deaminase/D-cysteine desulfhydrase family. Requires pyridoxal 5'-phosphate as cofactor.

The catalysed reaction is 1-aminocyclopropane-1-carboxylate + H2O = 2-oxobutanoate + NH4(+). The sequence is that of Putative 1-aminocyclopropane-1-carboxylate deaminase from Pyrococcus abyssi (strain GE5 / Orsay).